The chain runs to 637 residues: Chaperone protein HtpG (637 aa).

An a; substrate-binding region spans residues 1 to 335 (MQGTVNSERL…SSDLPLNISR (335 aa)). The b stretch occupies residues 336-559 (ETLQNNKIIE…DGSMDIRMER (224 aa)). Residues 560 to 637 (FLREQKQLNY…RMNSVLSQIN (78 aa)) are c.

It belongs to the heat shock protein 90 family. As to quaternary structure, homodimer.

The protein localises to the cytoplasm. Functionally, molecular chaperone. Has ATPase activity. The sequence is that of Chaperone protein HtpG from Ehrlichia ruminantium (strain Gardel).